We begin with the raw amino-acid sequence, 689 residues long: Methionine--tRNA ligase (689 aa).

Positions 15–25 (PYANGPIHLGH) match the 'HIGH' region motif. Residues C146, C149, C159, and C162 each contribute to the Zn(2+) site. A 'KMSKS' region motif is present at residues 332 to 336 (KMSKS). Position 335 (K335) interacts with ATP. The segment at 554–574 (DAPKTAAPEKTAEASSVSSEP) is disordered. Residues 588–689 (DFAKIDLRIA…EGAQPGMRVK (102 aa)) enclose the tRNA-binding domain.

The protein belongs to the class-I aminoacyl-tRNA synthetase family. MetG type 1 subfamily. In terms of assembly, homodimer. Zn(2+) is required as a cofactor.

The protein localises to the cytoplasm. It catalyses the reaction tRNA(Met) + L-methionine + ATP = L-methionyl-tRNA(Met) + AMP + diphosphate. Is required not only for elongation of protein synthesis but also for the initiation of all mRNA translation through initiator tRNA(fMet) aminoacylation. This is Methionine--tRNA ligase from Shewanella baltica (strain OS185).